A 95-amino-acid chain; its full sequence is Co-chaperonin GroES (95 aa).

The protein belongs to the GroES chaperonin family. In terms of assembly, heptamer of 7 subunits arranged in a ring. Interacts with the chaperonin GroEL.

It is found in the cytoplasm. Its function is as follows. Together with the chaperonin GroEL, plays an essential role in assisting protein folding. The GroEL-GroES system forms a nano-cage that allows encapsulation of the non-native substrate proteins and provides a physical environment optimized to promote and accelerate protein folding. GroES binds to the apical surface of the GroEL ring, thereby capping the opening of the GroEL channel. This Pseudoalteromonas translucida (strain TAC 125) protein is Co-chaperonin GroES.